We begin with the raw amino-acid sequence, 75 residues long: uncharacterized protein (75 aa).

The next 2 helical transmembrane spans lie at 5–25 (VIIC…IFEI) and 42–62 (VAIF…GSVL).

The protein localises to the membrane. This is an uncharacterized protein from Saccharomyces cerevisiae (strain ATCC 204508 / S288c) (Baker's yeast).